A 175-amino-acid polypeptide reads, in one-letter code: MAAVSISVSLRQAMLGRRAMATAAVSVCRVPSRLLSTSTWKLADNQTRDTQLITVDEKLDITTLTGVPEEHIKTRKVRIFVPARNNMQSGVNNTKKWKMEFDTRERWENPLMGWASTADPLSNMVLTFSAKEDAIAFAEKNGWSYDVEEKKVPKPKSKSYGANFSWNKRTRVSTK.

Residues 1–42 (MAAVSISVSLRQAMLGRRAMATAAVSVCRVPSRLLSTSTWKL) constitute a mitochondrion transit peptide. Phosphoserine is present on S173.

This sequence belongs to the complex I NDUFS4 subunit family. In terms of assembly, this is a component of the iron-sulfur (IP) fragment of the enzyme. Interacts with BCAP31 and TOMM40; the interaction mediates its translocation to the mitochondria; the interaction with BCAP31 is direct.

It localises to the mitochondrion inner membrane. Functionally, accessory subunit of the mitochondrial membrane respiratory chain NADH dehydrogenase (Complex I), that is believed not to be involved in catalysis. Complex I functions in the transfer of electrons from NADH to the respiratory chain. The immediate electron acceptor for the enzyme is believed to be ubiquinone. The chain is NADH dehydrogenase [ubiquinone] iron-sulfur protein 4, mitochondrial (Ndufs4) from Mus musculus (Mouse).